Reading from the N-terminus, the 450-residue chain is tRNA modification GTPase MnmE (450 aa).

Residues arginine 23, glutamate 81, and lysine 120 each contribute to the (6S)-5-formyl-5,6,7,8-tetrahydrofolate site. In terms of domain architecture, TrmE-type G spans 216–373 (GIHLVLAGKP…LLKKIATLAG (158 aa)). GTP-binding positions include 226-231 (NAGKSS), 245-251 (TPQAGTT), 270-273 (DTAG), and 337-340 (NKAD). Mg(2+)-binding residues include serine 230 and threonine 251. Residue lysine 450 coordinates (6S)-5-formyl-5,6,7,8-tetrahydrofolate.

This sequence belongs to the TRAFAC class TrmE-Era-EngA-EngB-Septin-like GTPase superfamily. TrmE GTPase family. Homodimer. Heterotetramer of two MnmE and two MnmG subunits. Requires K(+) as cofactor.

The protein resides in the cytoplasm. Its function is as follows. Exhibits a very high intrinsic GTPase hydrolysis rate. Involved in the addition of a carboxymethylaminomethyl (cmnm) group at the wobble position (U34) of certain tRNAs, forming tRNA-cmnm(5)s(2)U34. The protein is tRNA modification GTPase MnmE of Dichelobacter nodosus (strain VCS1703A).